The sequence spans 522 residues: MSNRVIIFDTTLRDGEQALAASLTVKEKLQIALALERLGVDVMEVGFPVSSPGDFKSVQTIAKTIKNSRVCALSRALEKDIDAAAQALSVADQFRIHTFISTSTIHVESKLKRSFDDVLEMAVNAVKYARRFTDDVEFSCEDAGRTPIDNLCRMVEEAIKAGARTINIPDTVGYTVPSEFGGIIQTLFNRVPNIDQAVISVHCHDDLGLSVANSIAAVEMGARQVECTINGIGERAGNCSLEEIAMILATRKGLLDLDCGINAKEIHRTSSLVSQLCNMPIQANKAIVGTNAFSHSSGIHQDGMLKAKNTYEIMTPESIGLNRNNLNMTSRSGRHVIKHRMEEMGYKPTDYDMDSLYEQFLTLADKKGQVFDYDLEALVFMESQAQDDDKYQLQHMMVHSDSTEGVATATVRIAVDGKDITEAATGNGPVDAAYNAIARATDRKINITNYKLSAKGEGQNALGQVDITAKYNEQMFHGVGLATDVVEASAQALVHVMNLVYRADKVADFKQQIHKERELGGV.

The region spanning 5-267 (VIIFDTTLRD…DCGINAKEIH (263 aa)) is the Pyruvate carboxyltransferase domain. Mn(2+) is bound by residues Asp-14, His-202, His-204, and Asn-238. A regulatory domain region spans residues 392 to 522 (QLQHMMVHSD…IHKERELGGV (131 aa)).

This sequence belongs to the alpha-IPM synthase/homocitrate synthase family. LeuA type 1 subfamily. Homodimer. The cofactor is Mn(2+).

It is found in the cytoplasm. It catalyses the reaction 3-methyl-2-oxobutanoate + acetyl-CoA + H2O = (2S)-2-isopropylmalate + CoA + H(+). The protein operates within amino-acid biosynthesis; L-leucine biosynthesis; L-leucine from 3-methyl-2-oxobutanoate: step 1/4. In terms of biological role, catalyzes the condensation of the acetyl group of acetyl-CoA with 3-methyl-2-oxobutanoate (2-ketoisovalerate) to form 3-carboxy-3-hydroxy-4-methylpentanoate (2-isopropylmalate). The protein is 2-isopropylmalate synthase of Shewanella frigidimarina (strain NCIMB 400).